The primary structure comprises 33 residues: Dermaseptin-H8 (33 aa).

The residue at position 33 (Leu-33) is a Leucine amide.

As to expression, expressed by the skin glands.

It is found in the secreted. Has antimicrobial activity. The chain is Dermaseptin-H8 from Pithecopus hypochondrialis (Orange-legged leaf frog).